We begin with the raw amino-acid sequence, 129 residues long: Glycine cleavage system H protein (129 aa).

A Lipoyl-binding domain is found at 24–106 (IATIGISAFA…YGEGWLVKVR (83 aa)). Lys65 bears the N6-lipoyllysine mark.

It belongs to the GcvH family. As to quaternary structure, the glycine cleavage system is composed of four proteins: P, T, L and H. It depends on (R)-lipoate as a cofactor.

In terms of biological role, the glycine cleavage system catalyzes the degradation of glycine. The H protein shuttles the methylamine group of glycine from the P protein to the T protein. This is Glycine cleavage system H protein from Cyanothece sp. (strain PCC 7425 / ATCC 29141).